Here is a 445-residue protein sequence, read N- to C-terminus: UDP-N-acetylmuramoylalanine--D-glutamate ligase (445 aa).

ATP is bound at residue 117-123 (GSNGKTT).

This sequence belongs to the MurCDEF family.

The protein localises to the cytoplasm. The catalysed reaction is UDP-N-acetyl-alpha-D-muramoyl-L-alanine + D-glutamate + ATP = UDP-N-acetyl-alpha-D-muramoyl-L-alanyl-D-glutamate + ADP + phosphate + H(+). The protein operates within cell wall biogenesis; peptidoglycan biosynthesis. In terms of biological role, cell wall formation. Catalyzes the addition of glutamate to the nucleotide precursor UDP-N-acetylmuramoyl-L-alanine (UMA). The polypeptide is UDP-N-acetylmuramoylalanine--D-glutamate ligase (Neisseria meningitidis serogroup C (strain 053442)).